Here is a 410-residue protein sequence, read N- to C-terminus: Retrovirus-related Pol polyprotein from type-1 retrotransposable element R1 2 (410 aa).

Residues 1–118 (GCPQGSIGGP…SCFRYLGVNV (118 aa)) enclose the Reverse transcriptase domain. Residues 254–410 (SSVIKLERLV…RLNLELDVNG (157 aa)) are nucleic acid-binding endonuclease.

The catalysed reaction is DNA(n) + a 2'-deoxyribonucleoside 5'-triphosphate = DNA(n+1) + diphosphate. The sequence is that of Retrovirus-related Pol polyprotein from type-1 retrotransposable element R1 2 from Nasonia vitripennis (Parasitic wasp).